Reading from the N-terminus, the 177-residue chain is Adenine phosphoribosyltransferase (177 aa).

The protein belongs to the purine/pyrimidine phosphoribosyltransferase family. As to quaternary structure, homodimer.

It is found in the cytoplasm. It catalyses the reaction AMP + diphosphate = 5-phospho-alpha-D-ribose 1-diphosphate + adenine. The protein operates within purine metabolism; AMP biosynthesis via salvage pathway; AMP from adenine: step 1/1. Catalyzes a salvage reaction resulting in the formation of AMP, that is energically less costly than de novo synthesis. This is Adenine phosphoribosyltransferase from Rhodococcus jostii (strain RHA1).